The primary structure comprises 180 residues: Large ribosomal subunit protein uL6 (180 aa).

This sequence belongs to the universal ribosomal protein uL6 family. As to quaternary structure, part of the 50S ribosomal subunit.

In terms of biological role, this protein binds to the 23S rRNA, and is important in its secondary structure. It is located near the subunit interface in the base of the L7/L12 stalk, and near the tRNA binding site of the peptidyltransferase center. The chain is Large ribosomal subunit protein uL6 from Picosynechococcus sp. (strain ATCC 27264 / PCC 7002 / PR-6) (Agmenellum quadruplicatum).